A 252-amino-acid chain; its full sequence is ATP synthase subunit a (252 aa).

The next 6 membrane-spanning stretches (helical) occupy residues 29–49 (FTNV…FLFI), 87–107 (FFPL…IGLF), 117–137 (IMIT…YGFY), 146–166 (LFVP…IEII), 196–216 (FIVS…LPLI), and 219–239 (VAIT…FTVL).

Belongs to the ATPase A chain family. In terms of assembly, F-type ATPases have 2 components, CF(1) - the catalytic core - and CF(0) - the membrane proton channel. CF(1) has five subunits: alpha(3), beta(3), gamma(1), delta(1), epsilon(1). CF(0) has three main subunits: a(1), b(2) and c(9-12). The alpha and beta chains form an alternating ring which encloses part of the gamma chain. CF(1) is attached to CF(0) by a central stalk formed by the gamma and epsilon chains, while a peripheral stalk is formed by the delta and b chains.

Its subcellular location is the cell inner membrane. Its function is as follows. Key component of the proton channel; it plays a direct role in the translocation of protons across the membrane. The protein is ATP synthase subunit a of Bartonella tribocorum (strain CIP 105476 / IBS 506).